Consider the following 182-residue polypeptide: Small ribosomal subunit protein uS4c (182 aa).

A disordered region spans residues 8 to 36 (LGALPGLTSKRPGSGSDPKNKSRSGKRSQ). The S4 RNA-binding domain maps to 82-143 (MRLDNILFRL…KQRSKALIQN (62 aa)).

This sequence belongs to the universal ribosomal protein uS4 family. In terms of assembly, part of the 30S ribosomal subunit. Contacts protein S5. The interaction surface between S4 and S5 is involved in control of translational fidelity.

It is found in the plastid. The protein resides in the chloroplast. Functionally, one of the primary rRNA binding proteins, it binds directly to 16S rRNA where it nucleates assembly of the body of the 30S subunit. In terms of biological role, with S5 and S12 plays an important role in translational accuracy. The chain is Small ribosomal subunit protein uS4c (rps4) from Dietes robinsoniana (Lord Howe wedding lily).